Here is a 420-residue protein sequence, read N- to C-terminus: Serine hydroxymethyltransferase (420 aa).

(6S)-5,6,7,8-tetrahydrofolate contacts are provided by residues Leu123 and Gly127–Leu129. Lys232 carries the N6-(pyridoxal phosphate)lysine modification. A (6S)-5,6,7,8-tetrahydrofolate-binding site is contributed by Ser357–Phe359.

It belongs to the SHMT family. In terms of assembly, homodimer. It depends on pyridoxal 5'-phosphate as a cofactor.

Its subcellular location is the cytoplasm. It carries out the reaction (6R)-5,10-methylene-5,6,7,8-tetrahydrofolate + glycine + H2O = (6S)-5,6,7,8-tetrahydrofolate + L-serine. It participates in one-carbon metabolism; tetrahydrofolate interconversion. The protein operates within amino-acid biosynthesis; glycine biosynthesis; glycine from L-serine: step 1/1. In terms of biological role, catalyzes the reversible interconversion of serine and glycine with tetrahydrofolate (THF) serving as the one-carbon carrier. This reaction serves as the major source of one-carbon groups required for the biosynthesis of purines, thymidylate, methionine, and other important biomolecules. Also exhibits THF-independent aldolase activity toward beta-hydroxyamino acids, producing glycine and aldehydes, via a retro-aldol mechanism. In Streptococcus pyogenes serotype M4 (strain MGAS10750), this protein is Serine hydroxymethyltransferase.